The sequence spans 198 residues: HTH-type transcriptional regulator BetI (198 aa).

An HTH tetR-type domain is found at 8–68 (PLRRRELIDA…ATMRHLLREL (61 aa)). The H-T-H motif DNA-binding region spans 31–50 (TVAQIAHEAGVSPALAHHYF).

It participates in amine and polyamine biosynthesis; betaine biosynthesis via choline pathway [regulation]. In terms of biological role, repressor involved in the biosynthesis of the osmoprotectant glycine betaine. It represses transcription of the choline transporter BetT and the genes of BetAB involved in the synthesis of glycine betaine. The polypeptide is HTH-type transcriptional regulator BetI (Brucella abortus (strain 2308)).